The chain runs to 355 residues: Heme A synthase (355 aa).

Helical transmembrane passes span 21-41 (LARW…VGGI), 85-102 (INLG…FWEW), 136-156 (LFAL…MVAS), 173-193 (LLTA…LGAL), 208-228 (AIGV…VAGL), 264-284 (FLIH…LLLL), 299-319 (ALVI…VSGV), and 322-342 (WVAV…AAAL). H270 serves as a coordination point for heme. H327 contacts heme.

This sequence belongs to the COX15/CtaA family. Type 2 subfamily. In terms of assembly, interacts with CtaB. It depends on heme b as a cofactor.

The protein resides in the cell membrane. It carries out the reaction Fe(II)-heme o + 2 A + H2O = Fe(II)-heme a + 2 AH2. It participates in porphyrin-containing compound metabolism; heme A biosynthesis; heme A from heme O: step 1/1. Its function is as follows. Catalyzes the conversion of heme O to heme A by two successive hydroxylations of the methyl group at C8. The first hydroxylation forms heme I, the second hydroxylation results in an unstable dihydroxymethyl group, which spontaneously dehydrates, resulting in the formyl group of heme A. In Sphingopyxis alaskensis (strain DSM 13593 / LMG 18877 / RB2256) (Sphingomonas alaskensis), this protein is Heme A synthase.